Reading from the N-terminus, the 635-residue chain is Threonine--tRNA ligase (635 aa).

Residues M1 to T61 form the TGS domain. Residues D242–P533 are catalytic. C333, H384, and H510 together coordinate Zn(2+).

This sequence belongs to the class-II aminoacyl-tRNA synthetase family. Homodimer. The cofactor is Zn(2+).

The protein localises to the cytoplasm. The catalysed reaction is tRNA(Thr) + L-threonine + ATP = L-threonyl-tRNA(Thr) + AMP + diphosphate + H(+). Its function is as follows. Catalyzes the attachment of threonine to tRNA(Thr) in a two-step reaction: L-threonine is first activated by ATP to form Thr-AMP and then transferred to the acceptor end of tRNA(Thr). Also edits incorrectly charged L-seryl-tRNA(Thr). The sequence is that of Threonine--tRNA ligase from Burkholderia lata (strain ATCC 17760 / DSM 23089 / LMG 22485 / NCIMB 9086 / R18194 / 383).